Here is a 438-residue protein sequence, read N- to C-terminus: CLSKKFEVAEFAGLRSSGCVTFSNKESSFFDVVSAQLTPKTTRSTPVKGETVAKLKVAINGFGRIGRNFLRCWHGRKDSPLDVVVVNDSGGVKNASHLLKYDSMLGTFKADVKIVDNETISVDGKHIKVVSSRDPLKLPWAELGIDIVIEGTGVFVDGPGAGKHIQAGAKKVIITAPAKGADIPTYVVGVNEQDYSHEVADIISNASCTTNCLAPFVKVMDEELGIVKGTMTTTHSYTGDQRLLDASHRDLRRARAAALNIVPTSTGAAKAVSLVLPQLKGKLNGIALRVPTPNVSVVDLVVNVAKKGITAEDVNAAFRKAADGPLKGVLAVCDEPLVSVDFRCSDVSSTIDSSLTMVMGDDMVKVVAWYDNEWGYSQRVVDLAHLVANNWPGSCSTRKWRSHWMSFARQILLMRNAKSMNNRFCYVSSFEMDDFRSQ.

The transit peptide at 1 to 53 (CLSKKFEVAEFAGLRSSGCVTFSNKESSFFDVVSAQLTPKTTRSTPVKGETVA) directs the protein to the chloroplast. Residues 64 to 65 (RI), Asp88, and Arg133 contribute to the NADP(+) site. Residues 207–209 (SCT), Thr238, Arg253, 266–267 (TG), and Arg289 contribute to the D-glyceraldehyde 3-phosphate site. Cys208 functions as the Nucleophile in the catalytic mechanism. Asn372 contacts NADP(+).

It belongs to the glyceraldehyde-3-phosphate dehydrogenase family. Tetramer of either four A chains (GAPDH 2) or two A and two B chains (GAPDH 1).

It localises to the plastid. Its subcellular location is the chloroplast. It catalyses the reaction D-glyceraldehyde 3-phosphate + phosphate + NADP(+) = (2R)-3-phospho-glyceroyl phosphate + NADPH + H(+). The protein operates within carbohydrate biosynthesis; Calvin cycle. This Nicotiana tabacum (Common tobacco) protein is Glyceraldehyde-3-phosphate dehydrogenase B, chloroplastic (GAPB).